Consider the following 448-residue polypeptide: Tapasin (448 aa).

Residues 1–20 form the signal peptide; it reads MKSLSLLLAVALGLATAVSA. The Lumenal segment spans residues 21 to 414; sequence GPAVIECWFV…LSGPSLEDSI (394 aa). Cysteine 27 and cysteine 91 are oxidised to a cystine. Asparagine 253 carries N-linked (GlcNAc...) asparagine glycosylation. In terms of domain architecture, Ig-like C1-type spans 292–399; sequence PKVSLMPATL…PASGRSAEVT (108 aa). Cysteine 315 and cysteine 382 are joined by a disulfide. A helical transmembrane segment spans residues 415 to 435; the sequence is GLFLSAFFLLGLFKALGWAAV. Topologically, residues 436-448 are cytoplasmic; sequence YLSTCKDSKKKAE.

As to quaternary structure, heterodimer with PDIA3; disulfide-linked. Obligatory mediator for the interaction between newly assembled MHC class I molecules, calreticulin, PDIA3 and TAP. Up to 4 MHC class I/tapasin complexes bind to 1 TAP. Interacts with HLA-G-B2M complex; this interaction is required for loading of high affinity peptides. On its own or as part of MHC class I peptide loading complex, interacts with ligand-free MR1 or MR1-B2M complex, providing for stable MR1 pools ready for metabolite antigen processing.

The protein resides in the endoplasmic reticulum membrane. In terms of biological role, involved in the association of MHC class I with transporter associated with antigen processing (TAP) and in the assembly of MHC class I with peptide (peptide loading). The chain is Tapasin (TAPBP) from Chlorocebus aethiops (Green monkey).